A 162-amino-acid chain; its full sequence is RNA pyrophosphohydrolase (162 aa).

Positions 7–149 (KYRPCVGIML…KKEVYKTVIE (143 aa)) constitute a Nudix hydrolase domain. Positions 40 to 61 (GGVDDGEELEQAALRELLEEVG) match the Nudix box motif.

Belongs to the Nudix hydrolase family. RppH subfamily. The cofactor is a divalent metal cation.

Accelerates the degradation of transcripts by removing pyrophosphate from the 5'-end of triphosphorylated RNA, leading to a more labile monophosphorylated state that can stimulate subsequent ribonuclease cleavage. This is RNA pyrophosphohydrolase from Wolbachia pipientis wMel.